Reading from the N-terminus, the 248-residue chain is MNQTNFGFKKIKANEKQSLVNSVFSNVADKYDLMNDLMSFGMHRLWKDEFIRQIPNLNSNILDVASGSGDIALKLAKKAKDRGSNISLTLSDINEEMLRQAKKKSIDLNLFQNLKFTVASAEELPFPDNSFDYYTIAFGIRNVPDINKALKEAYRVLKPMGKFICLEFSKVKESLLQDFYKFYSFNVIPKIGQIITGNKEAYDYLVESIDLFPSQDEFRIMIKEAGFEEINYKNLSGGIVAIHSAYKL.

S-adenosyl-L-methionine contacts are provided by S68 and D92.

The protein belongs to the class I-like SAM-binding methyltransferase superfamily. MenG/UbiE family.

It catalyses the reaction a 2-demethylmenaquinol + S-adenosyl-L-methionine = a menaquinol + S-adenosyl-L-homocysteine + H(+). The enzyme catalyses a 2-methoxy-6-(all-trans-polyprenyl)benzene-1,4-diol + S-adenosyl-L-methionine = a 5-methoxy-2-methyl-3-(all-trans-polyprenyl)benzene-1,4-diol + S-adenosyl-L-homocysteine + H(+). It participates in quinol/quinone metabolism; menaquinone biosynthesis; menaquinol from 1,4-dihydroxy-2-naphthoate: step 2/2. The protein operates within cofactor biosynthesis; ubiquinone biosynthesis. Methyltransferase required for the conversion of demethylmenaquinol (DMKH2) to menaquinol (MKH2) and the conversion of 2-polyprenyl-6-methoxy-1,4-benzoquinol (DDMQH2) to 2-polyprenyl-3-methyl-6-methoxy-1,4-benzoquinol (DMQH2). The sequence is that of Ubiquinone/menaquinone biosynthesis C-methyltransferase UbiE from Rickettsia bellii (strain RML369-C).